A 37-amino-acid polypeptide reads, in one-letter code: Large ribosomal subunit protein bL36 (37 aa).

Belongs to the bacterial ribosomal protein bL36 family.

The sequence is that of Large ribosomal subunit protein bL36 from Mycobacteroides abscessus (strain ATCC 19977 / DSM 44196 / CCUG 20993 / CIP 104536 / JCM 13569 / NCTC 13031 / TMC 1543 / L948) (Mycobacterium abscessus).